Here is a 608-residue protein sequence, read N- to C-terminus: tRNA (guanine(37)-N(1))-methyltransferase 1 (608 aa).

The disordered stretch occupies residues 207-229 (SRPKKKKRRKEEERSEGKKRTGK). Residues 216–229 (KEEERSEGKKRTGK) are compositionally biased toward basic and acidic residues. Residues Arg425, 463–464 (DL), 491–492 (DG), and Asn514 contribute to the S-adenosyl-L-methionine site.

It belongs to the class I-like SAM-binding methyltransferase superfamily. TRM5/TYW2 family. In terms of assembly, monomer.

It localises to the mitochondrion matrix. The protein resides in the nucleus. It is found in the cytoplasm. The enzyme catalyses guanosine(37) in tRNA + S-adenosyl-L-methionine = N(1)-methylguanosine(37) in tRNA + S-adenosyl-L-homocysteine + H(+). Its function is as follows. Specifically methylates the N1 position of guanosine-37 in various cytoplasmic and mitochondrial tRNAs. Methylation is not dependent on the nature of the nucleoside 5' of the target nucleoside. This is the first step in the biosynthesis of wybutosine (yW), a modified base adjacent to the anticodon of tRNAs and required for accurate decoding. The chain is tRNA (guanine(37)-N(1))-methyltransferase 1 from Vitis vinifera (Grape).